The chain runs to 636 residues: 1-deoxy-D-xylulose-5-phosphate synthase (636 aa).

Residues histidine 74 and 115–117 (GHA) each bind thiamine diphosphate. Aspartate 146 serves as a coordination point for Mg(2+). Thiamine diphosphate is bound by residues 147–148 (GA), asparagine 175, tyrosine 285, and glutamate 368. A Mg(2+)-binding site is contributed by asparagine 175.

The protein belongs to the transketolase family. DXPS subfamily. As to quaternary structure, homodimer. Requires Mg(2+) as cofactor. Thiamine diphosphate is required as a cofactor.

It carries out the reaction D-glyceraldehyde 3-phosphate + pyruvate + H(+) = 1-deoxy-D-xylulose 5-phosphate + CO2. Its pathway is metabolic intermediate biosynthesis; 1-deoxy-D-xylulose 5-phosphate biosynthesis; 1-deoxy-D-xylulose 5-phosphate from D-glyceraldehyde 3-phosphate and pyruvate: step 1/1. Catalyzes the acyloin condensation reaction between C atoms 2 and 3 of pyruvate and glyceraldehyde 3-phosphate to yield 1-deoxy-D-xylulose-5-phosphate (DXP). In Anaeromyxobacter dehalogenans (strain 2CP-C), this protein is 1-deoxy-D-xylulose-5-phosphate synthase.